Consider the following 196-residue polypeptide: uncharacterized protein (196 aa).

This is an uncharacterized protein from Pasteurella multocida (strain Pm70).